The chain runs to 436 residues: Xaa-Arg dipeptidase (436 aa).

This sequence belongs to the peptidase M20A family.

It catalyses the reaction beta-alanyl-L-lysine + H2O = beta-alanine + L-lysine. The catalysed reaction is beta-alanyl-L-ornithine + H2O = beta-alanine + L-ornithine. The enzyme catalyses N(2)-(4-aminobutanoyl)-L-lysine + H2O = 4-aminobutanoate + L-lysine. It carries out the reaction N(2)-(4-aminobutanoyl)-L-ornithine + H2O = 4-aminobutanoate + L-ornithine. It catalyses the reaction N(2)-(4-aminobutanoyl)-L-arginine + H2O = 4-aminobutanoate + L-arginine. Its function is as follows. Catalyzes the peptide bond hydrolysis in dipeptides having basic amino acids lysine, ornithine or arginine at C-terminus. Postulated to function in a metabolite repair mechanism by eliminating alternate dipeptide by-products formed during carnosine synthesis. The chain is Xaa-Arg dipeptidase from Homo sapiens (Human).